The chain runs to 100 residues: MIQQERLLKVLKAPHVSEKATNNAEKSNTIVFKVALDANKVEIANAVEQLFEVKVDSVRTVVVKGKTKRHGARMGRRSDWKKAYVTLQEGQSLDFVEGAE.

This sequence belongs to the universal ribosomal protein uL23 family. As to quaternary structure, part of the 50S ribosomal subunit. Contacts protein L29, and trigger factor when it is bound to the ribosome.

Functionally, one of the early assembly proteins it binds 23S rRNA. One of the proteins that surrounds the polypeptide exit tunnel on the outside of the ribosome. Forms the main docking site for trigger factor binding to the ribosome. The protein is Large ribosomal subunit protein uL23 of Pasteurella multocida (strain Pm70).